Reading from the N-terminus, the 270-residue chain is Formamidopyrimidine-DNA glycosylase (270 aa).

Pro2 acts as the Schiff-base intermediate with DNA in catalysis. Glu3 serves as the catalytic Proton donor. Lys57 (proton donor; for beta-elimination activity) is an active-site residue. DNA is bound by residues His90, Arg109, and Lys150. The FPG-type zinc finger occupies 235–269 (LVYGNKDKPCPRCGTKIKSIIIGQRNSFFCPQCQK). Arg259 serves as the catalytic Proton donor; for delta-elimination activity.

Belongs to the FPG family. As to quaternary structure, monomer. Zn(2+) serves as cofactor.

The catalysed reaction is Hydrolysis of DNA containing ring-opened 7-methylguanine residues, releasing 2,6-diamino-4-hydroxy-5-(N-methyl)formamidopyrimidine.. The enzyme catalyses 2'-deoxyribonucleotide-(2'-deoxyribose 5'-phosphate)-2'-deoxyribonucleotide-DNA = a 3'-end 2'-deoxyribonucleotide-(2,3-dehydro-2,3-deoxyribose 5'-phosphate)-DNA + a 5'-end 5'-phospho-2'-deoxyribonucleoside-DNA + H(+). In terms of biological role, involved in base excision repair of DNA damaged by oxidation or by mutagenic agents. Acts as a DNA glycosylase that recognizes and removes damaged bases. Has a preference for oxidized purines, such as 7,8-dihydro-8-oxoguanine (8-oxoG). Has AP (apurinic/apyrimidinic) lyase activity and introduces nicks in the DNA strand. Cleaves the DNA backbone by beta-delta elimination to generate a single-strand break at the site of the removed base with both 3'- and 5'-phosphates. In Histophilus somni (strain 129Pt) (Haemophilus somnus), this protein is Formamidopyrimidine-DNA glycosylase.